The following is a 72-amino-acid chain: Translation initiation factor IF-1 (72 aa).

The S1-like domain occupies 1–72; sequence MAGNDVIEIE…TKGRITYRHK (72 aa).

The protein belongs to the IF-1 family. In terms of assembly, component of the 30S ribosomal translation pre-initiation complex which assembles on the 30S ribosome in the order IF-2 and IF-3, IF-1 and N-formylmethionyl-tRNA(fMet); mRNA recruitment can occur at any time during PIC assembly.

Its subcellular location is the cytoplasm. In terms of biological role, one of the essential components for the initiation of protein synthesis. Stabilizes the binding of IF-2 and IF-3 on the 30S subunit to which N-formylmethionyl-tRNA(fMet) subsequently binds. Helps modulate mRNA selection, yielding the 30S pre-initiation complex (PIC). Upon addition of the 50S ribosomal subunit IF-1, IF-2 and IF-3 are released leaving the mature 70S translation initiation complex. This is Translation initiation factor IF-1 from Oenococcus oeni (strain ATCC BAA-331 / PSU-1).